The following is a 68-amino-acid chain: Putative alpha-conotoxin Qc alphaL-1 (68 aa).

An N-terminal signal peptide occupies residues 1-21; that stretch reads MGMRMMFTMFLLVVLATTVVS. The propeptide occupies 22–49; sequence INLDHAFDGRNAAANNKATDLMARTVRR. A disulfide bond links Cys-51 and Cys-64.

The protein belongs to the conotoxin A superfamily. As to expression, expressed by the venom duct.

It localises to the secreted. Alpha-conotoxins act on postsynaptic membranes, they bind to the nicotinic acetylcholine receptors (nAChR) and thus inhibit them. In Conus quercinus (Oak cone), this protein is Putative alpha-conotoxin Qc alphaL-1.